A 217-amino-acid chain; its full sequence is ITG-like peptide (217 aa).

An N-terminal signal peptide occupies residues 1-21 (MHRTMAVTAVLVLSAAGAAHA). Residues 22–208 (WGGLFNRFSS…REFVQHTAGE (187 aa)) constitute a propeptide that is removed on maturation.

As to expression, ITG-like peptide: Expressed in corpora cardiaca (CC), corpora allata (CA), antennal lobe (AL) and gnathal ganglion (GNG) (at protein level). Expression in AL detected in all animals, expression in GNG detected in most animals and in CA and CC detected in few animals (at protein level).

The protein localises to the secreted. In Agrotis ipsilon (Black cutworm moth), this protein is ITG-like peptide.